Consider the following 248-residue polypeptide: Ubiquinone biosynthesis O-methyltransferase (248 aa).

Residues Arg41, Gly72, Asp93, and Met136 each coordinate S-adenosyl-L-methionine.

It belongs to the methyltransferase superfamily. UbiG/COQ3 family.

The catalysed reaction is a 3-demethylubiquinol + S-adenosyl-L-methionine = a ubiquinol + S-adenosyl-L-homocysteine + H(+). The enzyme catalyses a 3-(all-trans-polyprenyl)benzene-1,2-diol + S-adenosyl-L-methionine = a 2-methoxy-6-(all-trans-polyprenyl)phenol + S-adenosyl-L-homocysteine + H(+). It functions in the pathway cofactor biosynthesis; ubiquinone biosynthesis. Its function is as follows. O-methyltransferase that catalyzes the 2 O-methylation steps in the ubiquinone biosynthetic pathway. The polypeptide is Ubiquinone biosynthesis O-methyltransferase (Rhizobium etli (strain CIAT 652)).